A 434-amino-acid polypeptide reads, in one-letter code: GTPase Obg (434 aa).

An Obg domain is found at 1–159 (MQFIDRCQIK…KTVRLELKYL (159 aa)). One can recognise an OBG-type G domain in the interval 160 to 329 (ANVGIVGYPN…LVDRVFDLYQ (170 aa)). GTP-binding positions include 166–173 (GYPNAGKS), 191–195 (FTTLV), 212–215 (DIPG), 282–285 (NKMD), and 310–312 (ISA). Mg(2+) contacts are provided by S173 and T193. Residues 356-434 (EKTIDDDPLD…ICDYEYLIDE (79 aa)) form the OCT domain.

Belongs to the TRAFAC class OBG-HflX-like GTPase superfamily. OBG GTPase family. Monomer. It depends on Mg(2+) as a cofactor.

Its subcellular location is the cytoplasm. An essential GTPase which binds GTP, GDP and possibly (p)ppGpp with moderate affinity, with high nucleotide exchange rates and a fairly low GTP hydrolysis rate. Plays a role in control of the cell cycle, stress response, ribosome biogenesis and in those bacteria that undergo differentiation, in morphogenesis control. The chain is GTPase Obg from Mycoplasmoides gallisepticum (strain R(low / passage 15 / clone 2)) (Mycoplasma gallisepticum).